The sequence spans 131 residues: Agouti-signaling protein (131 aa).

A signal peptide spans 1-22 (MDVTRLLLATLVGFLCFLTVHS). A glycan (N-linked (GlcNAc...) asparagine) is linked at Asn39. The segment at 58–96 (KSKKISRKEAEKRKRSSKKKASIKKVARPPPPSPCVATR) is disordered. Over residues 70–84 (RKRSSKKKASIKKVA) the composition is skewed to basic residues. Intrachain disulfides connect Cys92–Cys107, Cys99–Cys113, Cys106–Cys124, Cys110–Cys131, and Cys115–Cys122. The Agouti domain occupies 92–131 (CVATRDSCKPPAPACCNPCASCQCRFFGSACTCRVLNPNC).

It localises to the secreted. Functionally, involved in the regulation of melanogenesis. The binding of ASP to MC1R precludes alpha-MSH initiated signaling and thus blocks production of cAMP, leading to a down-regulation of eumelanogenesis (brown/black pigment) and thus increasing synthesis of pheomelanin (yellow/red pigment). The sequence is that of Agouti-signaling protein from Rattus norvegicus (Rat).